Here is a 684-residue protein sequence, read N- to C-terminus: MSAQDFLVELGTEELPPKALNTLAEAFLAGIEKGLQSAGLSFQAKHVYAAPRRLAVLITQLATQQPDRSINLDGPPRQAAFDAEGNPTQAALGFAKKCGVELSEIDQSGPKLRYSQSIKGKPTASLLPTIVEDSLNDLPIPKRMRWAARKEEFVRPTQWLVMLLGDEVIDCTILAQKAGRDSRGHRFHHPQSVRITAPANYLADLRAAYVLADANERRELISKRTAELATLQEGTAIVPADLLDEVTALVEWPVPLVCSFEERFLEVPQEALITTMQDNQKYFCLLDVDGKLLPRFITVANIESKDPRQIIEGNEKVVRPRLTDAEFFFKQDKKQKLEDFNLRLQNVVFQEKLGSVYDKAERISKLAAFIAPRIGGDAQRAARAGLLSKCDLATEMVGEFPEMQGIAGYYYALNDGEPEDVALALNEQYMPRGAGAELPSTVTGAAVAIADKLDTLVGIFGIGMLPTGSKDPYALRRAALGVLRILIEKKFDLDLNDAVAFAVSAFGSKVKAAGLADQVLEFIFDRLRARYEDEGVDVATYLSVRALKPGSALDFDQRVQAVQAFRKLPEAAALAAVNKRVSNLLSKIEGNVPTTIEAKYFDNANEFSLYSAIQQADQAVQPMAAARQYSETLARLAALREPVDAFFEAVMVNAEDAKVRANRYALLARLRGLFLGVADISVLS.

Belongs to the class-II aminoacyl-tRNA synthetase family. Tetramer of two alpha and two beta subunits.

It localises to the cytoplasm. The catalysed reaction is tRNA(Gly) + glycine + ATP = glycyl-tRNA(Gly) + AMP + diphosphate. The sequence is that of Glycine--tRNA ligase beta subunit from Pseudomonas fluorescens (strain ATCC BAA-477 / NRRL B-23932 / Pf-5).